Consider the following 103-residue polypeptide: Matrix Gla protein (103 aa).

An N-terminal signal peptide occupies residues 1-19 (MKSLLLLSILAALAVAALC). A 4-carboxyglutamate; partial modification is found at glutamate 21. Phosphoserine is present on residues serine 22, serine 25, and serine 28. The region spanning 51–97 (RAKAQERIRELNKPQYELNREACDDFKLCERYAMVYGYNAAYDRYFR) is the Gla domain. 4-carboxyglutamate occurs at positions 56, 60, 67, and 71. A disulfide bridge connects residues cysteine 73 and cysteine 79. A propeptide spans 99–102 (RRGA) (removed in short form; probably by carboxypeptidase N). A propeptide (removed in long form; probably by carboxypeptidase H) is located at residue lysine 103.

Belongs to the osteocalcin/matrix Gla protein family. Post-translationally, requires vitamin K-dependent gamma-carboxylation for its function.

The protein localises to the secreted. Its function is as follows. Associates with the organic matrix of bone and cartilage. Thought to act as an inhibitor of bone formation. This chain is Matrix Gla protein (MGP), found in Bos taurus (Bovine).